We begin with the raw amino-acid sequence, 713 residues long: Pro-neuregulin-3, membrane-bound isoform (713 aa).

The Extracellular portion of the chain corresponds to 1-362 (MSEGAAGASP…MESEDVYQRQ (362 aa)). Disordered stretches follow at residues 28-48 (AAAAAAAGGGPDGGGEGAAEP), 119-220 (SSFP…STQA), and 251-282 (AAASSSSPSSTSSTTTTPETSTSPKFHTTTYS). The span at 34-44 (AGGGPDGGGEG) shows a compositional bias: gly residues. Over residues 127–148 (TTTTTTSTTSPATPSAGGAASS) the composition is skewed to low complexity. A compositionally biased stretch (polar residues) spans 149–163 (RTPNRISTRLTTITR). 2 stretches are compositionally biased toward low complexity: residues 195-207 (STTAPFFSSSTPG) and 254-274 (SSSSPSSTSSTTTTPETSTSP). Residues 288-331 (HFKPCRDKDLAYCLNDGECFVIETLTGSHKHCRCKEGYQGVRCD) enclose the EGF-like domain. 3 disulfides stabilise this stretch: C292–C306, C300–C319, and C321–C330. The chain crosses the membrane as a helical span at residues 363-383 (VLSISCIIFGIVIVGMFCAAF). At 384 to 713 (YFKSKKQAKQ…EIQRDSVLTK (330 aa)) the chain is on the cytoplasmic side. A disordered region spans residues 449 to 496 (SAPQSFPEVTSPDRGSQPIKHHSPGQRSGMLHRNTFRRAPPSPRSRLG).

The protein belongs to the neuregulin family. As to quaternary structure, interacts with ERBB4. Proteolytic cleavage close to the plasma membrane on the external face leads to the release of the soluble growth factor form. Post-translationally, extensive glycosylation precedes the proteolytic cleavage. Expressed in sympathetic, motor, and sensory neurons.

The protein resides in the cell membrane. Its subcellular location is the secreted. Functionally, direct ligand for the ERBB4 tyrosine kinase receptor. Binding results in ligand-stimulated tyrosine phosphorylation and activation of the receptor. Does not bind to the EGF receptor, ERBB2 or ERBB3 receptors. This Mus musculus (Mouse) protein is Pro-neuregulin-3, membrane-bound isoform (Nrg3).